A 200-amino-acid chain; its full sequence is Small ribosomal subunit protein eS1 (200 aa).

This sequence belongs to the eukaryotic ribosomal protein eS1 family.

The chain is Small ribosomal subunit protein eS1 from Thermococcus gammatolerans (strain DSM 15229 / JCM 11827 / EJ3).